Reading from the N-terminus, the 436-residue chain is Cholecystokinin receptor type A (436 aa).

Topologically, residues 1-41 are extracellular; the sequence is MDVVDSLLMNGSNITPPCELGLENETLFCLDQPQPSKEWQS. N-linked (GlcNAc...) asparagine glycans are attached at residues Asn-10 and Asn-24. The cysteines at positions 18 and 29 are disulfide-linked. A helical transmembrane segment spans residues 42 to 67; sequence AVQILLYSFIFLLSVLGNTLVITVLI. At 68–77 the chain is on the cytoplasmic side; sequence RNKRMRTVTN. A helical transmembrane segment spans residues 78-104; the sequence is IFLLSLAVSDLMLCLFCMPFNLIPNLL. Residues 105–115 lie on the Extracellular side of the membrane; it reads KDFIFGSAVCK. A disulfide bridge connects residues Cys-114 and Cys-196. Residues 116–137 traverse the membrane as a helical segment; that stretch reads TTTYFMGTSVSVSTFNLVAISL. The Cytoplasmic segment spans residues 138 to 157; sequence ERYGAICRPLQSRVWQTKSH. Residues 158–178 traverse the membrane as a helical segment; sequence ALKVIAATWCLSFTIMTPYPI. The Extracellular segment spans residues 179–210; it reads YSNLVPFTKNNNQTANMCRFLLPSDAMQQSWQ. A glycan (N-linked (GlcNAc...) asparagine) is linked at Asn-190. The chain crosses the membrane as a helical span at residues 211–234; the sequence is TFLLLILFLIPGVVMVVAYGLISL. Topologically, residues 235 to 321 are cytoplasmic; the sequence is ELYQGIKFDA…NLIAKKRVIR (87 aa). The tract at residues 252–280 is disordered; it reads EKRLSSGGGGGGGSSSSRYEDSDGCYLQK. A helical transmembrane segment spans residues 322–342; sequence MLIVIVVLFFLCWMPIFSANA. Over 343-357 the chain is Extracellular; sequence WRAYDTVSAEKHLSG. A helical transmembrane segment spans residues 358 to 381; the sequence is TPISFILLLSYTSSCVNPIIYCFM. Residues 382–436 lie on the Cytoplasmic side of the membrane; it reads NKRFRLGFMATFPCCPNPGPTGVRGEVGEEEDGRTIRASLSRYSYSHMSTSAPPH. Cys-395 carries the S-palmitoyl cysteine lipid modification.

Belongs to the G-protein coupled receptor 1 family.

It is found in the cell membrane. In terms of biological role, receptor for cholecystokinin. Mediates pancreatic growth and enzyme secretion, smooth muscle contraction of the gall bladder and stomach. Has a 1000-fold higher affinity for CCK rather than for gastrin. It modulates feeding and dopamine-induced behavior in the central and peripheral nervous system. This receptor mediates its action by association with G proteins that activate a phosphatidylinositol-calcium second messenger system. The chain is Cholecystokinin receptor type A (Cckar) from Mus musculus (Mouse).